Consider the following 371-residue polypeptide: uncharacterized protein (371 aa).

It belongs to the Gfo/Idh/MocA family.

This is an uncharacterized protein from Synechocystis sp. (strain ATCC 27184 / PCC 6803 / Kazusa).